The sequence spans 939 residues: Valine--tRNA ligase (939 aa).

The short motif at 47–57 (PNVTGILHMGH) is the 'HIGH' region element. Positions 563-567 (KLSKS) match the 'KMSKS' region motif. Residue lysine 566 coordinates ATP. The stretch at 874–939 (EHLAKERVRL…QSILDKLASL (66 aa)) forms a coiled coil.

Belongs to the class-I aminoacyl-tRNA synthetase family. ValS type 1 subfamily. In terms of assembly, monomer.

The protein localises to the cytoplasm. The catalysed reaction is tRNA(Val) + L-valine + ATP = L-valyl-tRNA(Val) + AMP + diphosphate. Functionally, catalyzes the attachment of valine to tRNA(Val). As ValRS can inadvertently accommodate and process structurally similar amino acids such as threonine, to avoid such errors, it has a 'posttransfer' editing activity that hydrolyzes mischarged Thr-tRNA(Val) in a tRNA-dependent manner. This Chlamydia trachomatis serovar A (strain ATCC VR-571B / DSM 19440 / HAR-13) protein is Valine--tRNA ligase.